Consider the following 311-residue polypeptide: tRNA-cytidine(32) 2-sulfurtransferase (311 aa).

The short motif at 47–52 (SGGKDS) is the PP-loop motif element. [4Fe-4S] cluster is bound by residues cysteine 122, cysteine 125, and cysteine 213.

This sequence belongs to the TtcA family. As to quaternary structure, homodimer. Requires Mg(2+) as cofactor. It depends on [4Fe-4S] cluster as a cofactor.

The protein localises to the cytoplasm. The catalysed reaction is cytidine(32) in tRNA + S-sulfanyl-L-cysteinyl-[cysteine desulfurase] + AH2 + ATP = 2-thiocytidine(32) in tRNA + L-cysteinyl-[cysteine desulfurase] + A + AMP + diphosphate + H(+). It participates in tRNA modification. Functionally, catalyzes the ATP-dependent 2-thiolation of cytidine in position 32 of tRNA, to form 2-thiocytidine (s(2)C32). The sulfur atoms are provided by the cysteine/cysteine desulfurase (IscS) system. This Escherichia coli O139:H28 (strain E24377A / ETEC) protein is tRNA-cytidine(32) 2-sulfurtransferase.